Consider the following 157-residue polypeptide: Small ribosomal subunit protein uS7c (157 aa).

This sequence belongs to the universal ribosomal protein uS7 family. In terms of assembly, part of the 30S ribosomal subunit.

It localises to the plastid. The protein localises to the organellar chromatophore. Functionally, one of the primary rRNA binding proteins, it binds directly to 16S rRNA where it nucleates assembly of the head domain of the 30S subunit. The protein is Small ribosomal subunit protein uS7c (rps7) of Paulinella chromatophora.